Consider the following 511-residue polypeptide: Maturase K (511 aa).

The protein belongs to the intron maturase 2 family. MatK subfamily.

The protein localises to the plastid. It localises to the chloroplast. Functionally, usually encoded in the trnK tRNA gene intron. Probably assists in splicing its own and other chloroplast group II introns. This chain is Maturase K, found in Pistia stratiotes (Water lettuce).